A 1236-amino-acid chain; its full sequence is MANGGGGGGGSSGGGGGGGGSSLRMSSNIHANHLSLDASSSSSSSSSSSSSSSSSSSSSSVHEPKMDALIIPVTMEVPCDSRGQRMWWAFLASSMVTFFGGLFIILLWRTLKYLWTVCCHCGGKTKEAQKINNGSSQADGTLKPVDEKEEAVAAEVGWMTSVKDWAGVMISAQTLTGRVLVVLVFALSIGALVIYFIDSSNPIESCQNFYKDFTLQIDMAFNVFFLLYFGLRFIAANDKLWFWLEVNSVVDFFTVPPVFVSVYLNRSWLGLRFLRALRLIQFSEILQFLNILKTSNSIKLVNLLSIFISTWLTAAGFIHLVENSGDPWENFQNNQALTYWECVYLLMVTMSTVGYGDVYAKTTLGRLFMVFFILGGLAMFASYVPEIIELIGNRKKYGGSYSAVSGRKHIVVCGHITLESVSNFLKDFLHKDRDDVNVEIVFLHNISPNLELEALFKRHFTQVEFYQGSVLNPHDLARVKIESADACLILANKYCADPDAEDASNIMRVISIKNYHPKIRIITQMLQYHNKAHLLNIPSWNWKEGDDAICLAELKLGFIAQSCLAQGLSTMLANLFSMRSFIKIEEDTWQKYYLEGVSNEMYTEYLSSAFVGLSFPTVCELCFVKLKLLMIAIEYKSANRESRILINPGNHLKIQEGTLGFFIASDAKEVKRAFFYCKACHDDITDPKRIKKCGCKRPKMSIYKRMRRACCFDCGRSERDCSCMSGRVRGNVDTLERAFPLSSVSVNDCSTSFRAFEDEQPSTLSPKKKQRNGGMRNSPNTSPKLMRHDPLLIPGNDQIDNMDSNVKKYDSTGMFHWCAPKEIEKVILTRSEAAMTVLSGHVVVCIFGDVSSALIGLRNLVMPLRASNFHYHELKHIVFVGSIEYLKREWETLHNFPKVSILPGTPLSRADLRAVNINLCDMCVILSANQNNIDDTSLQDKECILASLNIKSMQFDDSIGVLQANSQGFTPPGMDRSSPDNSPVHGMLRQPSITTGVNIPIITELVNDTNVQFLDQDDDDDPDTELYLTQPFACGTAFAVSVLDSLMSATYFNDNILTLIRTLVTGGATPELEALIAEENALRGGYSTPQTLANRDRCRVAQLALLDGPFADLGDGGCYGDLFCKALKTYNMLCFGIYRLRDAHLSTPSQCTKRYVITNPPYEFELVPTDLIFCLMQFDHNAGQSRASLSHSSHSSQSSSKKSSSVHSIPSTANRQNRPKSRESRDKQKYVQEERL.

The segment covering 1–21 (MANGGGGGGGSSGGGGGGGGS) has biased composition (gly residues). The tract at residues 1 to 61 (MANGGGGGGG…SSSSSSSSSV (61 aa)) is disordered. Over 1–86 (MANGGGGGGG…VPCDSRGQRM (86 aa)) the chain is Extracellular. The span at 39-60 (SSSSSSSSSSSSSSSSSSSSSS) shows a compositional bias: low complexity. The chain crosses the membrane as a helical span at residues 87–107 (WWAFLASSMVTFFGGLFIILL). Over 108–178 (WRTLKYLWTV…MISAQTLTGR (71 aa)) the chain is Cytoplasmic. S-palmitoyl cysteine attachment occurs at residues Cys118, Cys119, and Cys121. Residues 179–199 (VLVVLVFALSIGALVIYFIDS) form a helical membrane-spanning segment. Residues 200-214 (SNPIESCQNFYKDFT) are Extracellular-facing. The chain crosses the membrane as a helical span at residues 215 to 235 (LQIDMAFNVFFLLYFGLRFIA). Residues 236–239 (ANDK) lie on the Cytoplasmic side of the membrane. The helical transmembrane segment at 240–260 (LWFWLEVNSVVDFFTVPPVFV) threads the bilayer. The Extracellular segment spans residues 261–264 (SVYL). A helical transmembrane segment spans residues 265-285 (NRSWLGLRFLRALRLIQFSEI). At 286-300 (LQFLNILKTSNSIKL) the chain is on the cytoplasmic side. Residues 301–321 (VNLLSIFISTWLTAAGFIHLV) traverse the membrane as a helical segment. The Extracellular segment spans residues 322–335 (ENSGDPWENFQNNQ). The segment at residues 336–358 (ALTYWECVYLLMVTMSTVGYGDV) is an intramembrane region (pore-forming). Residues 352–355 (TVGY) carry the Selectivity for potassium motif. Over 359-367 (YAKTTLGRL) the chain is Extracellular. A helical transmembrane segment spans residues 368 to 388 (FMVFFILGGLAMFASYVPEII). Residues 389–1236 (ELIGNRKKYG…KQKYVQEERL (848 aa)) are Cytoplasmic-facing. The RCK N-terminal 1 domain maps to 407–549 (RKHIVVCGHI…WNWKEGDDAI (143 aa)). Positions 439, 462, and 464 each coordinate Mg(2+). The interval 556–576 (LGFIAQSCLAQGLSTMLANLF) is segment S7. The tract at residues 613–633 (LSFPTVCELCFVKLKLLMIAI) is segment S8. A heme-binding motif region spans residues 677–681 (CKACH). Residues 757–787 (EDEQPSTLSPKKKQRNGGMRNSPNTSPKLMR) are disordered. The residue at position 763 (Thr763) is a Phosphothreonine. 3 positions are modified to phosphoserine: Ser765, Ser778, and Ser782. The interval 837-857 (VLSGHVVVCIFGDVSSALIGL) is segment S9. The RCK N-terminal 2 domain maps to 839–983 (SGHVVVCIFG…MDRSSPDNSP (145 aa)). Thr970 is subject to Phosphothreonine. Phosphoserine occurs at positions 978 and 982. The Calcium bowl motif lies at 1003 to 1025 (TELVNDTNVQFLDQDDDDDPDTE). Ca(2+) contacts are provided by Gln1012, Asp1015, Asp1018, and Asp1020. Positions 1032 to 1052 (FACGTAFAVSVLDSLMSATYF) are segment S10. Positions 1186–1211 (RASLSHSSHSSQSSSKKSSSVHSIPS) are enriched in low complexity. Residues 1186–1236 (RASLSHSSHSSQSSSKKSSSVHSIPSTANRQNRPKSRESRDKQKYVQEERL) are disordered. Residues 1220-1236 (KSRESRDKQKYVQEERL) are compositionally biased toward basic and acidic residues. Ser1221 and Ser1224 each carry phosphoserine.

Belongs to the potassium channel family. Calcium-activated (TC 1.A.1.3) subfamily. KCa1.1/KCNMA1 sub-subfamily. In terms of assembly, homotetramer; which constitutes the calcium-activated potassium channel. Interacts with RAB11B. Interacts with beta subunits KCNMB1, KCNMB2, KCNMB3 and KCNMB4. Interacts with gamma subunits LRRC26, LRRC38, LRRC52 and LRRC55. Beta and gamma subunits are accessory, and modulate its activity. Phosphorylated. Phosphorylation by kinases such as PKA and/or PKG. In smooth muscles, phosphorylation affects its activity. In terms of processing, palmitoylation by ZDHHC22 and ZDHHC23 within the intracellular linker between the S0 and S1 transmembrane domains regulates localization to the plasma membrane. Depalmitoylated by LYPLA1 and LYPLAL1, leading to retard exit from the trans-Golgi network. In terms of tissue distribution, widely expressed. Except in myocytes, it is almost ubiquitously expressed.

It is found in the cell membrane. The enzyme catalyses K(+)(in) = K(+)(out). Its activity is regulated as follows. Ethanol and carbon monoxide-bound heme increase channel activation. Heme inhibits channel activation. Functionally, potassium channel activated by both membrane depolarization or increase in cytosolic Ca(2+) that mediates export of K(+). It is also activated by the concentration of cytosolic Mg(2+). Its activation dampens the excitatory events that elevate the cytosolic Ca(2+) concentration and/or depolarize the cell membrane. It therefore contributes to repolarization of the membrane potential. Plays a key role in controlling excitability in a number of systems, such as regulation of the contraction of smooth muscle, the tuning of hair cells in the cochlea, regulation of transmitter release, and innate immunity. In smooth muscles, its activation by high level of Ca(2+), caused by ryanodine receptors in the sarcoplasmic reticulum, regulates the membrane potential. In cochlea cells, its number and kinetic properties partly determine the characteristic frequency of each hair cell and thereby helps to establish a tonotopic map. Kinetics of KCNMA1 channels are determined by alternative splicing, phosphorylation status and its combination with modulating beta subunits. Highly sensitive to both iberiotoxin (IbTx) and charybdotoxin (CTX). Possibly induces sleep when activated by melatonin and through melatonin receptor MTNR1A-dependent dissociation of G-beta and G-gamma subunits, leading to increased sensitivity to Ca(2+) and reduced synaptic transmission. Potassium channel activated by both membrane depolarization or increase in cytosolic Ca(2+) that mediates export of K(+). This chain is Calcium-activated potassium channel subunit alpha-1, found in Homo sapiens (Human).